Here is a 237-residue protein sequence, read N- to C-terminus: Small ribosomal subunit protein uS17m (237 aa).

This sequence belongs to the universal ribosomal protein uS17 family. As to quaternary structure, component of the mitochondrial small ribosomal subunit (mt-SSU). Mature yeast 74S mitochondrial ribosomes consist of a small (37S) and a large (54S) subunit. The 37S small subunit contains a 15S ribosomal RNA (15S mt-rRNA) and 34 different proteins. The 54S large subunit contains a 21S rRNA (21S mt-rRNA) and 46 different proteins.

It localises to the mitochondrion. Its function is as follows. Component of the mitochondrial ribosome (mitoribosome), a dedicated translation machinery responsible for the synthesis of mitochondrial genome-encoded proteins, including at least some of the essential transmembrane subunits of the mitochondrial respiratory chain. The mitoribosomes are attached to the mitochondrial inner membrane and translation products are cotranslationally integrated into the membrane. uS17m may have a meiosis-specific role as it accumulates during the middle stage of sporulation. The polypeptide is Small ribosomal subunit protein uS17m (MRPS17) (Saccharomyces cerevisiae (strain ATCC 204508 / S288c) (Baker's yeast)).